Consider the following 150-residue polypeptide: MVLCFPLLLLLLVLWGPVCLLHAWPKHLTRAHWFEIQHIQPSPLQCNRAMSGINNYTQHCKHQNTFLHDSFQNVAAVCDLLSIICKNRQHNCHQSSKPVNMTDCRLTSGKYPQCRYSAAAQYKFFIVACDPPQKGDPPYKLVPVHLDSIL.

An N-terminal signal peptide occupies residues 1 to 23; the sequence is MVLCFPLLLLLLVLWGPVCLLHA. The Proton acceptor role is filled by His38. Disulfide bonds link Cys46-Cys104, Cys60-Cys114, Cys78-Cys129, and Cys85-Cys92. Asn55 is a glycosylation site (N-linked (GlcNAc...) asparagine). Substrate is bound by residues 61-65 and Lys86; that span reads KHQNT. N-linked (GlcNAc...) asparagine glycosylation is present at Asn100. Residue Arg105 coordinates substrate. The active-site Proton donor is the His145.

It belongs to the pancreatic ribonuclease family. As to quaternary structure, interacts (via N-terminus) with bacterial lipopolysaccharide (LPS).

Its subcellular location is the secreted. It localises to the lysosome. The protein resides in the cytoplasmic granule. Ribonuclease which shows a preference for the pyrimidines uridine and cytosine. Has potent antibacterial activity against a range of Gram-positive and Gram-negative bacteria, including P.aeruginosa, A.baumanii, M.luteus, S.aureus, E.faecalis, E.faecium, S.saprophyticus and E.coli. Causes loss of bacterial membrane integrity, and also promotes agglutination of Gram-negative bacteria. Probably contributes to urinary tract sterility. Bactericidal activity is independent of RNase activity. This Macaca mulatta (Rhesus macaque) protein is Ribonuclease K6 (RNASE6).